The sequence spans 501 residues: MTDTQNKNYIIALDQGTTSSRAIIFDRDANVVSTAQSEFVQHYPQAGWVEHDPMEIFATQTACMTKALAQADLHHDQIAAIGITNQRETTVIWERDTGRPIYNAIVWQCRRSTEICQQLKRDGLEEYIKDTTGLVLDPYFSGSKVKWILDHVEGSRERARKGELMFGTIDTWLIWKFTGGKVHVTDYTNASRTMLFNIHTLEWDQRMLDVLDIPREILPEVKSSSEVYGHSKSGIPIAGIAGDQQAALFGQMCVEPGQAKNTYGTGCFLLMNTGKKAVKSAHGMLTTIGCGPRGEVAYALEGAVFNGGSTVQWLRDELKLINDALDTEYFAGKVKDSNGVYLVPAFTGLGAPYWDPYARGALFGLTRGVKVDHIIRAALESIAYQTRDVLDAMQQDSGERLKSLRVDGGAVANNFLMQFQADILGTHVERPQMRETTALGAAFLAGLAIGFWSSLDELRNKAVIERVFEPACEEAHREKLYAGWQKAVARTRDWEPHENEE.

T17 provides a ligand contact to ADP. ATP-binding residues include T17, T18, and S19. T17 serves as a coordination point for sn-glycerol 3-phosphate. ADP is bound at residue R21. The sn-glycerol 3-phosphate site is built by R87, E88, Y139, and D243. Glycerol contacts are provided by R87, E88, Y139, D243, and Q244. ADP is bound by residues T265 and G308. ATP is bound by residues T265, G308, Q312, and G409. ADP contacts are provided by G409 and N413.

Belongs to the FGGY kinase family.

It catalyses the reaction glycerol + ATP = sn-glycerol 3-phosphate + ADP + H(+). Its pathway is polyol metabolism; glycerol degradation via glycerol kinase pathway; sn-glycerol 3-phosphate from glycerol: step 1/1. With respect to regulation, inhibited by fructose 1,6-bisphosphate (FBP). Key enzyme in the regulation of glycerol uptake and metabolism. Catalyzes the phosphorylation of glycerol to yield sn-glycerol 3-phosphate. The sequence is that of Glycerol kinase from Pseudomonas syringae pv. tomato (strain ATCC BAA-871 / DC3000).